A 178-amino-acid polypeptide reads, in one-letter code: Large ribosomal subunit protein uL6 (178 aa).

It belongs to the universal ribosomal protein uL6 family. As to quaternary structure, part of the 50S ribosomal subunit.

In terms of biological role, this protein binds to the 23S rRNA, and is important in its secondary structure. It is located near the subunit interface in the base of the L7/L12 stalk, and near the tRNA binding site of the peptidyltransferase center. In Helicobacter hepaticus (strain ATCC 51449 / 3B1), this protein is Large ribosomal subunit protein uL6.